Reading from the N-terminus, the 283-residue chain is Bifunctional protein FolD (283 aa).

NADP(+)-binding positions include 165–167 (GAS) and serine 190.

This sequence belongs to the tetrahydrofolate dehydrogenase/cyclohydrolase family. Homodimer.

It carries out the reaction (6R)-5,10-methylene-5,6,7,8-tetrahydrofolate + NADP(+) = (6R)-5,10-methenyltetrahydrofolate + NADPH. It catalyses the reaction (6R)-5,10-methenyltetrahydrofolate + H2O = (6R)-10-formyltetrahydrofolate + H(+). Its pathway is one-carbon metabolism; tetrahydrofolate interconversion. In terms of biological role, catalyzes the oxidation of 5,10-methylenetetrahydrofolate to 5,10-methenyltetrahydrofolate and then the hydrolysis of 5,10-methenyltetrahydrofolate to 10-formyltetrahydrofolate. The protein is Bifunctional protein FolD of Cupriavidus taiwanensis (strain DSM 17343 / BCRC 17206 / CCUG 44338 / CIP 107171 / LMG 19424 / R1) (Ralstonia taiwanensis (strain LMG 19424)).